The chain runs to 335 residues: MTDNFTCNKTDGDNTDFRYFIYAVTYTVILVPGLIGNILALWVFYGYMKETKRAVVFMINLAIADLLQILSLPLRIFYYLNHDWPFGPGLCMFCFYLKYVNMYASIYFLVCISVRRFWFLMYPFRFNDCKQKYDLYISIIGWLIICLACLLFPLLRTNDDTPGNRTKCFVDLPIRNVNLAQSVAMITIGEVVGFVTPLMIVLYCTWKTALSLQNKYPISQHLGEKKKALKMILTCAGVFLVCFVPYHFSFPLDFLVKSNEIKSCFARRVILIFHSVALCLASLNSCLDPVIYYFTTNEFRRRLSRQDLPDNIQLHTKSYKIASNHATSTVAAELC.

At 1-27 the chain is on the extracellular side; it reads MTDNFTCNKTDGDNTDFRYFIYAVTYT. N-linked (GlcNAc...) asparagine glycans are attached at residues Asn-4 and Asn-8. The chain crosses the membrane as a helical span at residues 28-48; sequence VILVPGLIGNILALWVFYGYM. Residues 49–53 are Cytoplasmic-facing; sequence KETKR. The chain crosses the membrane as a helical span at residues 54–74; the sequence is AVVFMINLAIADLLQILSLPL. Residues 75-91 are Extracellular-facing; sequence RIFYYLNHDWPFGPGLC. The cysteines at positions 91 and 168 are disulfide-linked. Residues 92-112 traverse the membrane as a helical segment; it reads MFCFYLKYVNMYASIYFLVCI. The Cytoplasmic segment spans residues 113–134; that stretch reads SVRRFWFLMYPFRFNDCKQKYD. Residues 135–155 traverse the membrane as a helical segment; it reads LYISIIGWLIICLACLLFPLL. The Extracellular portion of the chain corresponds to 156 to 182; it reads RTNDDTPGNRTKCFVDLPIRNVNLAQS. An N-linked (GlcNAc...) asparagine glycan is attached at Asn-164. A helical transmembrane segment spans residues 183–203; sequence VAMITIGEVVGFVTPLMIVLY. Topologically, residues 204-231 are cytoplasmic; that stretch reads CTWKTALSLQNKYPISQHLGEKKKALKM. The helical transmembrane segment at 232–252 threads the bilayer; the sequence is ILTCAGVFLVCFVPYHFSFPL. The Extracellular segment spans residues 253-268; sequence DFLVKSNEIKSCFARR. A helical transmembrane segment spans residues 269 to 289; the sequence is VILIFHSVALCLASLNSCLDP. At 290–335 the chain is on the cytoplasmic side; sequence VIYYFTTNEFRRRLSRQDLPDNIQLHTKSYKIASNHATSTVAAELC.

This sequence belongs to the G-protein coupled receptor 1 family. In terms of assembly, interacts with GNA13. Interacts with CCL21. In terms of tissue distribution, expressed in spleen and, at low levels, in brain. Highly expressed in developing and mature regulatory T-cells.

It localises to the cell membrane. Its function is as follows. G-protein-coupled receptor of lysophosphatidylserine (LysoPS) that plays different roles in immune response. Plays a negative role in regulatory T-cell accumulation and homeostasis. Under inflammatory conditions where LysoPS production increases, contributes to the down-regulation of regulatory T-cell activity to favor effector response. Mediates the suppression of IL-2 production in activated T-lymphocytes leading to inhibition of growth, proliferation and differentiation of T-cells. Mechanistically, acts via G(s)-containing heterotrimeric G proteins to trigger elevated cyclic AMP levels and protein kinase A/PKA activity, which may in turn act to antagonize proximal TCR signaling. Plays an important role in the initial period of sepsis through the regulation of macrophage polarization and pro- and anti-inflammatory cytokine secretions. Upon testosterone treatment, acts as a receptor for CCL21 and subsequently triggers through G(q)-alpha and G(12)/G(13) proteins a calcium flux leading to chemotactic effects on activated B-cells. Signals via GNA13 and PKA to promote CD86 up-regulation by follicular B-cells. The chain is Probable G-protein coupled receptor 174 (Gpr174) from Mus musculus (Mouse).